We begin with the raw amino-acid sequence, 115 residues long: NAD(P)H-quinone oxidoreductase subunit M (115 aa).

This sequence belongs to the complex I NdhM subunit family. NDH-1 can be composed of about 15 different subunits; different subcomplexes with different compositions have been identified which probably have different functions.

It is found in the cellular thylakoid membrane. It carries out the reaction a plastoquinone + NADH + (n+1) H(+)(in) = a plastoquinol + NAD(+) + n H(+)(out). The enzyme catalyses a plastoquinone + NADPH + (n+1) H(+)(in) = a plastoquinol + NADP(+) + n H(+)(out). In terms of biological role, NDH-1 shuttles electrons from an unknown electron donor, via FMN and iron-sulfur (Fe-S) centers, to quinones in the respiratory and/or the photosynthetic chain. The immediate electron acceptor for the enzyme in this species is believed to be plastoquinone. Couples the redox reaction to proton translocation, and thus conserves the redox energy in a proton gradient. Cyanobacterial NDH-1 also plays a role in inorganic carbon-concentration. The sequence is that of NAD(P)H-quinone oxidoreductase subunit M from Synechococcus sp. (strain WH7803).